Here is a 351-residue protein sequence, read N- to C-terminus: ATP-dependent protease ATP-binding subunit-like protein (351 aa).

The disordered stretch occupies residues 1 to 26 (MPYITDMLRDRNSAATPPAEERSEPV). 79–86 (GPTGVGKT) is an ATP binding site.

The protein belongs to the ClpA/ClpB family.

This chain is ATP-dependent protease ATP-binding subunit-like protein, found in Rhodococcus erythropolis (Arthrobacter picolinophilus).